The primary structure comprises 368 residues: C-glycoside deglycosidase alpha subunit (368 aa).

Glu-145 provides a ligand contact to a divalent metal cation. His-147 functions as the Proton acceptor in the catalytic mechanism. Residues Asp-177, His-275, and Glu-311 each coordinate a divalent metal cation.

This sequence belongs to the C-glycoside deglycosidase alpha subunit family. In terms of assembly, heterodimer composed of an alpha subunit (CarB) and a beta subunit (CarC). The cofactor is a divalent metal cation.

The catalysed reaction is 3''-dehydroisovitexin = 1,5-anhydro-D-erythro-hex-1-en-3-ulose + apigenin. It carries out the reaction 3''-dehydroisoorientin = 1,5-anhydro-D-erythro-hex-1-en-3-ulose + luteolin. Its function is as follows. Carbon-carbon bond-cleaving enzyme which participates in the metabolism of C-glycosides. Acts on the C6-glycosylated compounds 3''-dehydroisovitexin (3''-oxo-isovitexin) and 3''-dehydroisoorientin (3''-oxo-homoorientin). Shows weak activity with 3'-dehydromangiferin (3'-oxo-mangiferin). This Microbacterium trichothecenolyticum (Aureobacterium trichothecenolyticum) protein is C-glycoside deglycosidase alpha subunit.